A 160-amino-acid chain; its full sequence is MKFVKIDSSSVDMKKYKLQNNVRRSIKSSSMNYANVAIMTDADHDGLGSIYPSLLGFFSNWPELFEQGRIRFVKTPVIIAQVGKKQEWFYTVAEYESAKDALPKHSIRYIKGLGSLEKSEYREMIQNPVYDVVKLPENWKELFEMLMGDNADLRKEWMSQ.

Part of the DNA topoisomerase complex made of gp39, gp52 and gp60. It depends on Mg(2+) as a cofactor.

The catalysed reaction is ATP-dependent breakage, passage and rejoining of double-stranded DNA.. Functionally, small subunit of the DNA topoisomerase that untwists superhelical DNA. Controls topological states of double-stranded DNA by transient breakage and subsequent rejoining of DNA strands. This is DNA topoisomerase small subunit (60) from Enterobacteria phage T4 (Bacteriophage T4).